The chain runs to 133 residues: MANHDPISDMLTRIRNASEKRHQNTKVPASRMSRSIAKVLQQEGFIAEISEEGEGVHTNLVLELKYSGKHRLPTIRSMQRVSKPGLRIYKNTRGLPKVLGGLGVAIISTSKGVMSDRDARKQGVGGEVLCYVY.

Belongs to the universal ribosomal protein uS8 family. In terms of assembly, part of the 30S ribosomal subunit. Contacts proteins S5 and S12.

One of the primary rRNA binding proteins, it binds directly to 16S rRNA central domain where it helps coordinate assembly of the platform of the 30S subunit. The sequence is that of Small ribosomal subunit protein uS8 from Synechococcus sp. (strain WH7803).